The chain runs to 310 residues: MVATRGRPCPTNFSRPQRPRVAGNGTKSQRCRGRLTTSMLGVAPEAKGPPVKVHHLNCGTMNAFGIALLCHVLLVETDDGLVLVDTGFGIQDCLDPGRVGLFRHVLRPAFLQAETAARQIEQLGYRTSDVRHIVLTHFDFDHIGGIADFPEAHLHVTAAEARGAIHAPSLRERLRYRRGQWAHGPKLVEHGPDGEPWRGFASAKPLDSIGTGVVLVPMPGHTRGHAAVAVDAGHRWVLHCGDAFYHRGTLDGRFRVPFVMRAEEKLLSYNRNQLRDNQARIVELHRRHDPDLLIVCAHDPDLYQLARDTA.

The segment at 1–29 (MVATRGRPCPTNFSRPQRPRVAGNGTKSQ) is disordered. Zn(2+) contacts are provided by H137, D139, D141, H142, H221, D242, and H288.

The protein belongs to the metallo-beta-lactamase superfamily. The cofactor is Zn(2+).

This is Probable metallo-hydrolase Mb2322c from Mycobacterium bovis (strain ATCC BAA-935 / AF2122/97).